A 303-amino-acid chain; its full sequence is NmrA-like family domain-containing oxidoreductase FVEG_08287 (303 aa).

NADP(+) is bound by residues 8–13, 8–14, 36–39, Arg37, 56–57, 77–79, and 159–162; these read LGAGEL, LGAGELG, LRPS, QG, IFR, and FMSF.

It belongs to the NmrA-type oxidoreductase family.

Functionally, nmrA-like family domain-containing oxidoreductase; part of the Fusarium detoxification of benzoxazolinone cluster 1 (FDB1) involved in the degradation of benzoxazolinones produced by the host plant. Maize, wheat, and rye produce the 2 benzoxazinone phytoanticipins 2,4-dihy-droxy-7-methoxy-1,4-benzoxazin-3-one (DIMBOA) and 2,4-dihydroxy-1,4-benzoxazin-3-one (DIBOA) that, due to their inherent instability once released, spontaneously degrade to the more stable corresponding benzoxazolinones, 6-methoxy-2-benzoxazolinone (MBOA) and 2-benzoxazolinone (BOA), respectively. The first step in the detoxification of benzoxazolinones involves the hydrolysis of the cyclic ester bond of benzoxazolinones by the FDB1 cluster gamma-lactamase MBL1 to aminophenols. MBL1 is able to convert BOA into 2-aminophenol (2-AP), as well as MBOA into 5-methoxy-2-aminophenol (2-AMP). The FDB2 cluster N-malonyltransferase FDB2/NAT1 then metabolizes aminophenols via N-malonylation to non-toxic malonamic acids. FDB2/NAT1 converts 2-AP into N-(2-hydroxyphenyl) malonamic acid (HPMA) and 2-AMP into N-(2-hydroxy-4-methoxyphenyl) malonamic acid (HMPMA). The duplicated dienlactone hydrolases DLH1 and DLH2 may provide redundant function for hydrolyzing the lactone moiety in the BOA molecule. The roles of the amidases an other enzymes encoded by the 2 FDB clusters have not been identified so far. This Gibberella moniliformis (strain M3125 / FGSC 7600) (Maize ear and stalk rot fungus) protein is NmrA-like family domain-containing oxidoreductase FVEG_08287.